The primary structure comprises 467 residues: Probable apyrase 2 (467 aa).

The Cytoplasmic segment spans residues 1–25 (MRRYSALPGGGARPDTLADRLHRYR). Residues 26–46 (GVLLVILAPLALVSLVLLLMP) form a helical; Signal-anchor for type II membrane protein membrane-spanning segment. The Extracellular segment spans residues 47-467 (RSPASSSAAA…PLGSAIEVAS (421 aa)). Position 70–80 (70–80 (VIFDAGSSGSR)) interacts with ATP. Catalysis depends on Glu192, which acts as the Proton acceptor. 216–226 (GVVDLGGGSVQ) is an ATP binding site.

This sequence belongs to the GDA1/CD39 NTPase family. It depends on Ca(2+) as a cofactor.

The protein resides in the membrane. The catalysed reaction is a ribonucleoside 5'-triphosphate + 2 H2O = a ribonucleoside 5'-phosphate + 2 phosphate + 2 H(+). Catalyzes the hydrolysis of phosphoanhydride bonds of nucleoside tri- and di-phosphates. The polypeptide is Probable apyrase 2 (APY2) (Oryza sativa subsp. japonica (Rice)).